The primary structure comprises 330 residues: Probable L-asparaginase (330 aa).

The region spanning 6–330 (PTIALLATGG…EKIQEMFEEY (325 aa)) is the Asparaginase/glutaminase domain. Thr-16 (O-isoaspartyl threonine intermediate) is an active-site residue. Substrate is bound by residues Ser-62 and 95 to 96 (TD).

This sequence belongs to the asparaginase 1 family.

The protein localises to the cytoplasm. The catalysed reaction is L-asparagine + H2O = L-aspartate + NH4(+). The polypeptide is Probable L-asparaginase (ansA) (Helicobacter pylori (strain ATCC 700392 / 26695) (Campylobacter pylori)).